A 737-amino-acid chain; its full sequence is Glycogen [starch] synthase, muscle (737 aa).

A Phosphoserine; by AMPK and PKA modification is found at serine 8. Phosphoserine is present on serine 11. Residue lysine 39 coordinates UDP. Positions 205 and 211 each coordinate UDP-alpha-D-glucose. Residues histidine 291, glutamate 292, glutamine 294, histidine 297, and lysine 301 each contribute to the alpha-D-glucose 6-phosphate site. Arginine 331 serves as a coordination point for UDP. Residue arginine 331 participates in UDP-alpha-D-glucose binding. Serine 412 bears the Phosphoserine mark. Position 501 (histidine 501) interacts with alpha-D-glucose 6-phosphate. Residues glutamate 510, tryptophan 512, and glycine 513 each coordinate UDP-alpha-D-glucose. Residue threonine 515 participates in UDP binding. Arginine 582 and arginine 586 together coordinate alpha-D-glucose 6-phosphate. The segment at 634-737 (YRYPRPASVP…PTSSLGEERN (104 aa)) is disordered. Position 641 is a phosphoserine; by DYRK2, GSK3-alpha, GSK3-beta and PASK (serine 641). Phosphoserine; by GSK3-alpha and GSK3-beta is present on residues serine 645 and serine 649. Serine 652 bears the Phosphoserine mark. Serine 653 bears the Phosphoserine; by GSK3-alpha and GSK3-beta mark. A Phosphoserine; by CK2 modification is found at serine 657. Positions 658–681 (EDEEDPRNGPLEEDSERYDEDEEA) are enriched in acidic residues. Serine 672 carries the post-translational modification Phosphoserine. The span at 682–695 (AKDRRNIRAPEWPR) shows a compositional bias: basic and acidic residues. Serine 698 bears the Phosphoserine mark. The span at 698 to 714 (SCTSSTSGSKRNSVDTA) shows a compositional bias: polar residues. Threonine 700 carries the post-translational modification Phosphothreonine. The residue at position 710 (serine 710) is a Phosphoserine. Low complexity predominate over residues 715–737 (TSSSLSTPSEPLSPTSSLGEERN). A Phosphothreonine modification is found at threonine 721. A phosphoserine mark is found at serine 727 and serine 731.

The protein belongs to the glycosyltransferase 3 family. As to quaternary structure, part of the GYS1-GYG1 complex, a heterooctamer composed of a tetramer of GYS1 and 2 dimers of GYG1, where each GYS1 protomer binds to one GYG1 subunit (via GYG1 C-terminus); the GYS1 tetramer may dissociate from GYG1 dimers to continue glycogen polymerization on its own. In terms of processing, phosphorylation at Ser-8 by AMPK inactivates the enzyme activity. Primed phosphorylation at Ser-657 (site 5) by CSNK2A1 and CSNK2A2 is required for inhibitory phosphorylation at Ser-641 (site 3a), Ser-645 (site 3b), Ser-649 (site 3c) and Ser-653 (site 4) by GSK3A an GSK3B. Phosphorylated at Ser-641 by PASK, leading to inactivation; phosphorylation by PASK is inhibited by glycogen. Phosphorylated at Ser-641 by DYRK2, leading to inactivation. Dephosphorylation at Ser-641 and Ser-645 by PP1 activates the enzyme.

It carries out the reaction [(1-&gt;4)-alpha-D-glucosyl](n) + UDP-alpha-D-glucose = [(1-&gt;4)-alpha-D-glucosyl](n+1) + UDP + H(+). Its pathway is glycan biosynthesis; glycogen biosynthesis. Allosteric activation by glucose-6-phosphate. Phosphorylation reduces the activity towards UDP-glucose. When in the non-phosphorylated state, glycogen synthase does not require glucose-6-phosphate as an allosteric activator; when phosphorylated it does. In terms of biological role, glycogen synthase participates in the glycogen biosynthetic process along with glycogenin and glycogen branching enzyme. Extends the primer composed of a few glucose units formed by glycogenin by adding new glucose units to it. In this context, glycogen synthase transfers the glycosyl residue from UDP-Glc to the non-reducing end of alpha-1,4-glucan. The protein is Glycogen [starch] synthase, muscle (GYS1) of Macaca mulatta (Rhesus macaque).